Reading from the N-terminus, the 603-residue chain is Threonine--tRNA ligase (603 aa).

A catalytic region spans residues 197–499 (DHRKLGKELG…LIEEYAGDFP (303 aa)). Residues C296, H347, and H476 each coordinate Zn(2+).

Belongs to the class-II aminoacyl-tRNA synthetase family. In terms of assembly, homodimer. Requires Zn(2+) as cofactor.

The protein resides in the cytoplasm. The enzyme catalyses tRNA(Thr) + L-threonine + ATP = L-threonyl-tRNA(Thr) + AMP + diphosphate + H(+). In terms of biological role, catalyzes the attachment of threonine to tRNA(Thr) in a two-step reaction: L-threonine is first activated by ATP to form Thr-AMP and then transferred to the acceptor end of tRNA(Thr). Also edits incorrectly charged L-seryl-tRNA(Thr). In Synechocystis sp. (strain ATCC 27184 / PCC 6803 / Kazusa), this protein is Threonine--tRNA ligase.